A 102-amino-acid chain; its full sequence is Large ribosomal subunit protein uL24 (102 aa).

This sequence belongs to the universal ribosomal protein uL24 family. As to quaternary structure, part of the 50S ribosomal subunit.

In terms of biological role, one of two assembly initiator proteins, it binds directly to the 5'-end of the 23S rRNA, where it nucleates assembly of the 50S subunit. Its function is as follows. One of the proteins that surrounds the polypeptide exit tunnel on the outside of the subunit. The polypeptide is Large ribosomal subunit protein uL24 (Leuconostoc citreum (strain KM20)).